A 414-amino-acid chain; its full sequence is Methyl-CpG-binding domain protein 2 (414 aa).

The interval 1–152 (MRAHPGGGRC…GPRATESGKR (152 aa)) is required for interaction with DHX9 and PRMT5. The disordered stretch occupies residues 1-163 (MRAHPGGGRC…DCPALPPGWK (163 aa)). Positions 77 to 95 (GRGRGRGRGRGRGRGRGRG) are enriched in basic residues. Residues 98 to 123 (QSGGSGLGGDGGGGAGGCGGGSGGGV) show a composition bias toward gly residues. The 69-residue stretch at 148-216 (ESGKRMDCPA…SSFDFRTGKM (69 aa)) folds into the MBD domain. Phosphoserine is present on Ser-184. The disordered stretch occupies residues 217-244 (MPSKLQKNKQRLRNDPLNQNKGKPDLNT). The segment covering 232-244 (PLNQNKGKPDLNT) has biased composition (polar residues). Ser-410 is modified (phosphoserine).

As to quaternary structure, heterodimer with MBD3 (via N-terminus). Component of the MeCP1 complex that contains HDAC1 and HDAC2. Component of the nucleosome remodeling and deacetylase (NuRD) repressor complex, composed of core proteins MTA1, MTA2, MTA3, RBBP4, RBBP7, HDAC1, HDAC2, MBD2, MBD3, and peripherally associated proteins CDK2AP1, CDK2AP2, GATAD2A, GATAD2B, CHD3, CHD4 and CHD5. The exact stoichiometry of the NuRD complex is unknown, and some subunits such as MBD2 and MBD3, GATAD2A and GATAD2B, and CHD3, CHD4 and CHD5 define mutually exclusive NuRD complexes. Interacts with CDK2AP1. Interacts with DHX9. Interacts with DNMT1. Interacts with GATAD2A/p66-alpha. Interacts with GATAD2B/p66-beta. Interacts with GPN1. Interacts with MIZF. Interacts with PRMT5. Interacts with SIN3A. Interacts with SPHK2. In terms of tissue distribution, highly expressed in brain, heart, kidney, lung, skeletal muscle, spleen and testis. Detected at lower levels in embryonic stem cells.

It localises to the nucleus. The protein localises to the chromosome. Its function is as follows. Binds CpG islands in promoters where the DNA is methylated at position 5 of cytosine within CpG dinucleotides. Binds hemimethylated DNA as well. Recruits histone deacetylases and DNA methyltransferases to chromatin. Acts as a component of the histone deacetylase NuRD complex which participates in the remodeling of chromatin. Acts as transcriptional repressor and plays a role in gene silencing. Functions as a scaffold protein, targeting GATAD2A and GATAD2B to chromatin to promote repression. May enhance the activation of some unmethylated cAMP-responsive promoters. Selectively represses transcription activity of methylated rRNA promoters. This is Methyl-CpG-binding domain protein 2 from Mus musculus (Mouse).